A 1038-amino-acid polypeptide reads, in one-letter code: uncharacterized protein (1038 aa).

Over residues 1–14 the composition is skewed to polar residues; it reads MEENTAQKQSNATG. Residues 1–100 are disordered; the sequence is MEENTAQKQS…QSENENYDFS (100 aa). Residues 58-71 are compositionally biased toward basic and acidic residues; the sequence is NPERELNSDGTDRI. Acidic residues predominate over residues 72 to 83; sequence IEEEEEEDDIEN. Residues Ser-112, Ser-113, and Ser-114 each carry the phosphoserine modification. Disordered regions lie at residues 144 to 201, 360 to 381, 422 to 441, 454 to 526, and 556 to 575; these read GKDP…VKRR, ELDN…TEQA, SHSN…DEKL, QTTK…SGEL, and TNSE…QPGT. Over residues 156 to 179 the composition is skewed to low complexity; it reads SSMASSSTRSSQSSQVSAIQPQSQ. Positions 180–198 are enriched in basic and acidic residues; that stretch reads DDNRVSDIRQMENRRELNV. Composition is skewed to basic and acidic residues over residues 426–441 and 489–505; these read HSNE…DEKL and DAEK…EHHP. Ser-436 carries the phosphoserine modification. Residues 506-522 are compositionally biased toward polar residues; that stretch reads SITSVNSPFLYSPSKQP. Phosphoserine occurs at positions 618 and 856. Disordered regions lie at residues 803 to 864, 940 to 974, and 1005 to 1024; these read RGSL…ASAD, GEAP…SPAR, and KAKS…KESK. A compositionally biased stretch (low complexity) spans 826 to 859; that stretch reads TLSLKTSTTGLSSHSKSAENNSTQQSTTSPSINS. Residues 955–974 are compositionally biased toward polar residues; the sequence is VSTTTKLAKRITQPSLSPAR. Residues 1009–1020 show a composition bias toward low complexity; sequence EQSNAKSSSSSI.

It localises to the cytoplasm. This is an uncharacterized protein from Schizosaccharomyces pombe (strain 972 / ATCC 24843) (Fission yeast).